The sequence spans 184 residues: Glutathione-regulated potassium-efflux system ancillary protein KefG (184 aa).

This sequence belongs to the NAD(P)H dehydrogenase (quinone) family. KefG subfamily. Interacts with KefB.

It is found in the cell inner membrane. It carries out the reaction a quinone + NADH + H(+) = a quinol + NAD(+). The catalysed reaction is a quinone + NADPH + H(+) = a quinol + NADP(+). In terms of biological role, regulatory subunit of a potassium efflux system that confers protection against electrophiles. Required for full activity of KefB. This is Glutathione-regulated potassium-efflux system ancillary protein KefG from Shigella dysenteriae serotype 1 (strain Sd197).